A 138-amino-acid chain; its full sequence is Cysteine desulfuration protein SufE (138 aa).

The active-site Cysteine persulfide intermediate is the cysteine 51.

Belongs to the SufE family. Homodimer. Interacts with SufS.

Its subcellular location is the cytoplasm. It functions in the pathway cofactor biosynthesis; iron-sulfur cluster biosynthesis. In terms of biological role, participates in cysteine desulfuration mediated by SufS. Cysteine desulfuration mobilizes sulfur from L-cysteine to yield L-alanine and constitutes an essential step in sulfur metabolism for biosynthesis of a variety of sulfur-containing biomolecules. Functions as a sulfur acceptor for SufS, by mediating the direct transfer of the sulfur atom from the S-sulfanylcysteine of SufS, an intermediate product of cysteine desulfuration process. The protein is Cysteine desulfuration protein SufE of Salmonella agona (strain SL483).